A 1022-amino-acid chain; its full sequence is MVSPLCDSQLLYHRPSISPTASQFVIADGIILRQNRLLSSSSFWGTKFGNTVKLGVSGCSSCSRKRSTSVNASLGGLLSGIFKGSDNGESTRQQYASIVASVNRLETEISALSDSELRERTDALKQRAQKGESMDSLLPEAFAVVREASKRVLGLRPFDVQLIGGMVLHKGEIAEMRTGEGKTLVAILPAYLNALSGKGVHVVTVNDYLARRDCEWVGQVPRFLGLKVGLIQQNMTPEQRKENYLCDITYVTNSELGFDYLRDNLATSVEELVLRDFNYCVIDEVDSILIDEARTPLIISGPAEKPSDQYYKAAKIASAFERDIHYTVDEKQKTVLLTEQGYEDAEEILDVKDLYDPREQWASYVLNAIKAKELFLRDVNYIIRAKEVLIVDEFTGRVMQGRRWSDGLHQAVEAKEGLPIQNESITLASISYQNFFLQFPKLCGMTGTASTESAEFESIYKLKVTIVPTNKPMIRKDESDVVFKAVNGKWRAVVVEISRMHKTGRAVLVGTTSVEQSDELSQLLREAGITHEVLNAKPENVEREAEIVAQSGRLGAVTIATNMAGRGTDIILGGNAEFMARLKLREILMPRVVKPTDGVFVSVKKAPPKRTWKVNEKLFPCKLSNEKAKLAEEAVQSAVEAWGQKSLTELEAEERLSYSCEKGPVQDEVIGKLRTAFLAIAKEYKGYTDEERKKVVEAGGLHVVGTERHESRRIDNQLRGRSGRQGDPGSSRFFLSLEDNIFRIFGGDRIQGMMRAFRVEDLPIESKMLTKALDEAQRKVENYFFDIRKQLFEFDEVLNSQRDRVYTERRRALVSDSLEPLIIEYAELTMDDILEANIGPDTPKESWDFEKLIAKVQQYCYLLNDLTPDLLKSEGSSYEGLQDYLRARGRDAYLQKREIVEKQSPGLMKDAERFLILSNIDRLWKEHLQALKFVQQAVGLRGYAQRDPLIEYKLEGYNLFLEMMAQIRRNVIYSIYQFQPVRVKKDEEKKSQNGKPSKQVDNASEKPKQVGVTDEPSSIASA.

Residues 1 to 72 (MVSPLCDSQL…SRKRSTSVNA (72 aa)) constitute a chloroplast transit peptide. Serine 73 bears the N-acetylserine mark. Position 176 to 183 (176 to 183 (MRTGEGKT)) interacts with ATP. A disordered region spans residues 985–1022 (KDEEKKSQNGKPSKQVDNASEKPKQVGVTDEPSSIASA). Residues 993 to 1002 (NGKPSKQVDN) are compositionally biased toward polar residues.

Belongs to the SecA family. In terms of assembly, part of the Sec protein translocation apparatus. Interacts probably with SCY1. Expressed in green tissues, including cotyledons, rosette and cauline leaves, and sepals. Also detected at the base and the tip of the trichome.

The protein resides in the plastid. It is found in the chloroplast stroma. It localises to the chloroplast thylakoid membrane. The enzyme catalyses ATP + H2O + chloroplast-proteinSide 1 = ADP + phosphate + chloroplast-proteinSide 2.. Functionally, has a central role in coupling the hydrolysis of ATP to the transfer of proteins across the thylakoid membrane. Involved in photosynthetic acclimation and required for chloroplast biogenesis. The chain is Protein translocase subunit SECA1, chloroplastic from Arabidopsis thaliana (Mouse-ear cress).